The primary structure comprises 217 residues: Large ribosomal subunit protein uL1 (217 aa).

At K122 the chain carries N6,N6-dimethyllysine; alternate. K122 is modified (N6-methyllysine; alternate).

This sequence belongs to the universal ribosomal protein uL1 family.

The chain is Large ribosomal subunit protein uL1 (rpl10a) from Dictyostelium discoideum (Social amoeba).